The following is a 226-amino-acid chain: Orotate phosphoribosyltransferase (226 aa).

Residues K26, 73–74 (YK), R100, K101, K104, H106, and 128–136 (EDVTTSGKS) contribute to the 5-phospho-alpha-D-ribose 1-diphosphate site. Orotate-binding residues include T132 and R161.

Belongs to the purine/pyrimidine phosphoribosyltransferase family. PyrE subfamily. Homodimer. It depends on Mg(2+) as a cofactor.

The catalysed reaction is orotidine 5'-phosphate + diphosphate = orotate + 5-phospho-alpha-D-ribose 1-diphosphate. The protein operates within pyrimidine metabolism; UMP biosynthesis via de novo pathway; UMP from orotate: step 1/2. Catalyzes the transfer of a ribosyl phosphate group from 5-phosphoribose 1-diphosphate to orotate, leading to the formation of orotidine monophosphate (OMP). The chain is Orotate phosphoribosyltransferase from Agathobacter rectalis (strain ATCC 33656 / DSM 3377 / JCM 17463 / KCTC 5835 / VPI 0990) (Eubacterium rectale).